The sequence spans 837 residues: Phenylalanine--tRNA ligase beta subunit (837 aa).

The tRNA-binding domain occupies 39 to 149 (SASLEGIVTG…EMNIAIPKIG (111 aa)). In terms of domain architecture, B5 spans 415 to 520 (IEEQLLLLRR…RLIGYDRFDS (106 aa)). The Mg(2+) site is built by Asp-498, Asp-504, Glu-507, and Glu-508. An FDX-ACB domain is found at 743–836 (PTVPSMERDI…LKVEFSAELR (94 aa)).

This sequence belongs to the phenylalanyl-tRNA synthetase beta subunit family. Type 1 subfamily. As to quaternary structure, tetramer of two alpha and two beta subunits. Requires Mg(2+) as cofactor.

Its subcellular location is the cytoplasm. The enzyme catalyses tRNA(Phe) + L-phenylalanine + ATP = L-phenylalanyl-tRNA(Phe) + AMP + diphosphate + H(+). The sequence is that of Phenylalanine--tRNA ligase beta subunit from Prochlorococcus marinus (strain SARG / CCMP1375 / SS120).